The sequence spans 126 residues: Aspartate 1-decarboxylase (126 aa).

Ser-25 (schiff-base intermediate with substrate; via pyruvic acid) is an active-site residue. Residue Ser-25 is modified to Pyruvic acid (Ser). A substrate-binding site is contributed by Thr-57. Tyr-58 functions as the Proton donor in the catalytic mechanism. 73–75 (GAA) serves as a coordination point for substrate.

The protein belongs to the PanD family. As to quaternary structure, heterooctamer of four alpha and four beta subunits. The cofactor is pyruvate. In terms of processing, is synthesized initially as an inactive proenzyme, which is activated by self-cleavage at a specific serine bond to produce a beta-subunit with a hydroxyl group at its C-terminus and an alpha-subunit with a pyruvoyl group at its N-terminus.

Its subcellular location is the cytoplasm. It carries out the reaction L-aspartate + H(+) = beta-alanine + CO2. The protein operates within cofactor biosynthesis; (R)-pantothenate biosynthesis; beta-alanine from L-aspartate: step 1/1. Functionally, catalyzes the pyruvoyl-dependent decarboxylation of aspartate to produce beta-alanine. The chain is Aspartate 1-decarboxylase from Cronobacter sakazakii (strain ATCC BAA-894) (Enterobacter sakazakii).